The chain runs to 300 residues: MNDRLAARLEAEVRGEILRDEPMARHTSLRVGGPADFFVTPADPDDMRALLAILAETGTPWLAVGGGYNLLIRDGGFRGVVISSARMTSLERLEGNRAVVGAGVANGRLTAFLRNEGLAGLEFLCGIPGTVGGALAMNAGAHGGAILDRVEEILTIGTAGFECKGRELLDYGYRYLKLQPGEIIIGATFVLDSDDPRRISERIDGCRAHRTASQQVGFPNAGSFFKNPPGQAAWRLIEDAGLRGARVGGAQVSEVHTNFLVNRGGATAADFLALAARIKDAVKLKSGTALEEEVKIFGDE.

The 165-residue stretch at 30–194 (RVGGPADFFV…IGATFVLDSD (165 aa)) folds into the FAD-binding PCMH-type domain. R174 is an active-site residue. S223 (proton donor) is an active-site residue. Residue E293 is part of the active site.

Belongs to the MurB family. FAD serves as cofactor.

The protein localises to the cytoplasm. The enzyme catalyses UDP-N-acetyl-alpha-D-muramate + NADP(+) = UDP-N-acetyl-3-O-(1-carboxyvinyl)-alpha-D-glucosamine + NADPH + H(+). Its pathway is cell wall biogenesis; peptidoglycan biosynthesis. Functionally, cell wall formation. In Geobacter sulfurreducens (strain ATCC 51573 / DSM 12127 / PCA), this protein is UDP-N-acetylenolpyruvoylglucosamine reductase.